The following is a 551-amino-acid chain: Arylsulfatase (551 aa).

An N-terminal signal peptide occupies residues 1–20 (MKSAPFLFLLGLLGLVTAQT). Glutamine 21 is modified (blocked amino end (Gln)). The Ca(2+) site is built by aspartate 60, histidine 61, and cysteine 100. Cysteine 100 functions as the Nucleophile in the catalytic mechanism. Cysteine 100 carries the post-translational modification 3-oxoalanine (Cys). Residue histidine 158 is part of the active site. Asparagine 164, asparagine 213, and asparagine 296 each carry an N-linked (GlcNAc...) asparagine glycan. The Ca(2+) site is built by aspartate 308 and histidine 309.

Belongs to the sulfatase family. Ca(2+) serves as cofactor. Post-translationally, the conversion to 3-oxoalanine (also known as C-formylglycine, FGly), of a serine or cysteine residue in prokaryotes and of a cysteine residue in eukaryotes, is critical for catalytic activity.

It localises to the cytoplasm. It is found in the secreted. The protein resides in the extracellular space. Its subcellular location is the extracellular matrix. The enzyme catalyses an aryl sulfate + H2O = a phenol + sulfate + H(+). Functionally, may be a structural component of the extracellular matrices involved in cell movement during morphogenesis. The protein is Arylsulfatase of Hemicentrotus pulcherrimus (Sea urchin).